The primary structure comprises 294 residues: MLISLPKVCGIYRYNVSMSKMTWLNVGGQADVLFKPRDIEDLMCLIKDAELPISVIGATSNIIIRDSGIRGITVKLGKEFAYIKCKDNSSIVAGGAALLSNLAYFAGEQQISGLEFLAGIPGTVGGGIEMNAGAYGSDIASVVKFIRAVNLEDGNLYEFSSEEMGYFYRGHSLKGRWIFIEAEFKGVSSEYELILQRLKEVIDKKNKSQPVRGKTAGCIFKNPIGCKAWKLIDESGCRGLDNGVAKISKKHCNFLLNYNNATALDLENLGNRVKDAVKDKFNIELEWEIRVLGR.

Positions 26-189 (VGGQADVLFK…IEAEFKGVSS (164 aa)) constitute an FAD-binding PCMH-type domain. Arg-169 is a catalytic residue. Cys-218 acts as the Proton donor in catalysis. The active site involves Glu-288.

The protein belongs to the MurB family. The cofactor is FAD.

It is found in the cytoplasm. It carries out the reaction UDP-N-acetyl-alpha-D-muramate + NADP(+) = UDP-N-acetyl-3-O-(1-carboxyvinyl)-alpha-D-glucosamine + NADPH + H(+). The protein operates within cell wall biogenesis; peptidoglycan biosynthesis. In terms of biological role, cell wall formation. The chain is UDP-N-acetylenolpyruvoylglucosamine reductase from Wolbachia pipientis subsp. Culex pipiens (strain wPip).